Consider the following 198-residue polypeptide: Recombination protein RecR (198 aa).

The C4-type zinc-finger motif lies at 57–72; sequence CSVCGHITDRDPCYIC. The Toprim domain maps to 80-175; it reads SVVCVVQEPK…KVTRIAHGLP (96 aa).

Belongs to the RecR family.

May play a role in DNA repair. It seems to be involved in an RecBC-independent recombinational process of DNA repair. It may act with RecF and RecO. This chain is Recombination protein RecR, found in Bacillus mycoides (strain KBAB4) (Bacillus weihenstephanensis).